The following is a 306-amino-acid chain: N(1)-aminopropylagmatine ureohydrolase (306 aa).

Mn(2+) contacts are provided by His-121, Asp-145, His-147, Asp-149, Asp-228, and Asp-230.

The protein belongs to the arginase family. The cofactor is Mn(2+).

It catalyses the reaction N(1)-(3-aminopropyl)agmatine + H2O = urea + spermidine. Its pathway is amine and polyamine biosynthesis; spermidine biosynthesis. In terms of biological role, ureohydrolase involved in the biosynthesis of spermidine via the carboxyaminopropylagmatine (CAPA) pathway. Catalyzes the conversion of aminopropylagmatine (APA) to spermidine and urea. Is highly specific to APA and incapable of releasing measurable urea from CAPA, agmatine, arginine, guanidine, guanidinobutyrate and guanidinopropionate. The protein is N(1)-aminopropylagmatine ureohydrolase of Synechocystis sp. (strain ATCC 27184 / PCC 6803 / Kazusa).